A 359-amino-acid polypeptide reads, in one-letter code: Protein LpfD (359 aa).

Residues 1–24 form the signal peptide; that stretch reads MLKKLIMFTGLLGGSVLFSGQALA.

This sequence belongs to the fimbrial protein family.

Its subcellular location is the fimbrium. The chain is Protein LpfD (lpfD) from Salmonella typhimurium (strain LT2 / SGSC1412 / ATCC 700720).